The chain runs to 1353 residues: Trifunctional purine biosynthetic protein adenosine-3 (1353 aa).

The ATP-grasp domain maps to 114–321 (KDFMLRHGIP…LFDVMEACCS (208 aa)). ATP is bound by residues 193–196 (EELL), E200, R223, and N232. Positions 291 and 293 each coordinate Mg(2+). The segment at 441–1155 (GLSYKDSGVD…QKMLSQRRKR (715 aa)) is AIRS domain. A phosphoserine mark is found at S814 and S816. Residues 1153–1353 (RKRVAVLISG…ALISPEVSSQ (201 aa)) form a GART domain region. A N(1)-(5-phospho-beta-D-ribosyl)glycinamide-binding site is contributed by 1164-1166 (GSN). Residues R1219, 1244–1247 (MRVL), and N1261 each bind (6R)-10-formyltetrahydrofolate. H1263 serves as the catalytic Proton donor. 1295 to 1299 (DEGVD) contributes to the (6R)-10-formyltetrahydrofolate binding site. 1325–1328 (HKAE) contributes to the N(1)-(5-phospho-beta-D-ribosyl)glycinamide binding site.

The protein in the N-terminal section; belongs to the GARS family. In the central section; belongs to the AIR synthase family. It in the C-terminal section; belongs to the GART family. Homodimer. Requires Mg(2+) as cofactor. It depends on Mn(2+) as a cofactor.

It carries out the reaction 5-phospho-beta-D-ribosylamine + glycine + ATP = N(1)-(5-phospho-beta-D-ribosyl)glycinamide + ADP + phosphate + H(+). It catalyses the reaction 2-formamido-N(1)-(5-O-phospho-beta-D-ribosyl)acetamidine + ATP = 5-amino-1-(5-phospho-beta-D-ribosyl)imidazole + ADP + phosphate + H(+). The catalysed reaction is N(1)-(5-phospho-beta-D-ribosyl)glycinamide + (6R)-10-formyltetrahydrofolate = N(2)-formyl-N(1)-(5-phospho-beta-D-ribosyl)glycinamide + (6S)-5,6,7,8-tetrahydrofolate + H(+). Its pathway is purine metabolism; IMP biosynthesis via de novo pathway; 5-amino-1-(5-phospho-D-ribosyl)imidazole from N(2)-formyl-N(1)-(5-phospho-D-ribosyl)glycinamide: step 2/2. It participates in purine metabolism; IMP biosynthesis via de novo pathway; N(1)-(5-phospho-D-ribosyl)glycinamide from 5-phospho-alpha-D-ribose 1-diphosphate: step 2/2. It functions in the pathway purine metabolism; IMP biosynthesis via de novo pathway; N(2)-formyl-N(1)-(5-phospho-D-ribosyl)glycinamide from N(1)-(5-phospho-D-ribosyl)glycinamide (10-formyl THF route): step 1/1. In terms of biological role, trifunctional enzyme that catalyzes three distinct reactions as part of the 'de novo' inosine monophosphate biosynthetic pathway. The protein is Trifunctional purine biosynthetic protein adenosine-3 of Drosophila melanogaster (Fruit fly).